A 245-amino-acid polypeptide reads, in one-letter code: 5-oxoprolinase subunit A (245 aa).

The protein belongs to the LamB/PxpA family. As to quaternary structure, forms a complex composed of PxpA, PxpB and PxpC.

The enzyme catalyses 5-oxo-L-proline + ATP + 2 H2O = L-glutamate + ADP + phosphate + H(+). Functionally, catalyzes the cleavage of 5-oxoproline to form L-glutamate coupled to the hydrolysis of ATP to ADP and inorganic phosphate. This Serratia proteamaculans (strain 568) protein is 5-oxoprolinase subunit A.